Reading from the N-terminus, the 180-residue chain is Crossover junction endodeoxyribonuclease RuvC (180 aa).

Catalysis depends on residues Asp-7, Glu-66, and Asp-138. Residues Asp-7, Glu-66, and Asp-138 each contribute to the Mg(2+) site.

It belongs to the RuvC family. In terms of assembly, homodimer which binds Holliday junction (HJ) DNA. The HJ becomes 2-fold symmetrical on binding to RuvC with unstacked arms; it has a different conformation from HJ DNA in complex with RuvA. In the full resolvosome a probable DNA-RuvA(4)-RuvB(12)-RuvC(2) complex forms which resolves the HJ. It depends on Mg(2+) as a cofactor.

The protein localises to the cytoplasm. It carries out the reaction Endonucleolytic cleavage at a junction such as a reciprocal single-stranded crossover between two homologous DNA duplexes (Holliday junction).. In terms of biological role, the RuvA-RuvB-RuvC complex processes Holliday junction (HJ) DNA during genetic recombination and DNA repair. Endonuclease that resolves HJ intermediates. Cleaves cruciform DNA by making single-stranded nicks across the HJ at symmetrical positions within the homologous arms, yielding a 5'-phosphate and a 3'-hydroxyl group; requires a central core of homology in the junction. The consensus cleavage sequence is 5'-(A/T)TT(C/G)-3'. Cleavage occurs on the 3'-side of the TT dinucleotide at the point of strand exchange. HJ branch migration catalyzed by RuvA-RuvB allows RuvC to scan DNA until it finds its consensus sequence, where it cleaves and resolves the cruciform DNA. This is Crossover junction endodeoxyribonuclease RuvC from Paraburkholderia xenovorans (strain LB400).